A 647-amino-acid chain; its full sequence is DNA mismatch repair protein MutL (647 aa).

It belongs to the DNA mismatch repair MutL/HexB family.

In terms of biological role, this protein is involved in the repair of mismatches in DNA. It is required for dam-dependent methyl-directed DNA mismatch repair. May act as a 'molecular matchmaker', a protein that promotes the formation of a stable complex between two or more DNA-binding proteins in an ATP-dependent manner without itself being part of a final effector complex. The protein is DNA mismatch repair protein MutL of Bacillus cereus (strain G9842).